Here is a 359-residue protein sequence, read N- to C-terminus: UDP-3-O-acylglucosamine N-acyltransferase (359 aa).

His256 (proton acceptor) is an active-site residue.

It belongs to the transferase hexapeptide repeat family. LpxD subfamily. In terms of assembly, homotrimer.

It carries out the reaction a UDP-3-O-[(3R)-3-hydroxyacyl]-alpha-D-glucosamine + a (3R)-hydroxyacyl-[ACP] = a UDP-2-N,3-O-bis[(3R)-3-hydroxyacyl]-alpha-D-glucosamine + holo-[ACP] + H(+). It participates in bacterial outer membrane biogenesis; LPS lipid A biosynthesis. Functionally, catalyzes the N-acylation of UDP-3-O-acylglucosamine using 3-hydroxyacyl-ACP as the acyl donor. Is involved in the biosynthesis of lipid A, a phosphorylated glycolipid that anchors the lipopolysaccharide to the outer membrane of the cell. This chain is UDP-3-O-acylglucosamine N-acyltransferase, found in Rhodopseudomonas palustris (strain BisB5).